The primary structure comprises 147 residues: Ribosome-binding factor A (147 aa).

The interval 123–147 (LAKLKEGAQPAGDANPYKTSDEEED) is disordered.

This sequence belongs to the RbfA family. Monomer. Binds 30S ribosomal subunits, but not 50S ribosomal subunits or 70S ribosomes.

The protein localises to the cytoplasm. In terms of biological role, one of several proteins that assist in the late maturation steps of the functional core of the 30S ribosomal subunit. Associates with free 30S ribosomal subunits (but not with 30S subunits that are part of 70S ribosomes or polysomes). Required for efficient processing of 16S rRNA. May interact with the 5'-terminal helix region of 16S rRNA. This chain is Ribosome-binding factor A, found in Corynebacterium aurimucosum (strain ATCC 700975 / DSM 44827 / CIP 107346 / CN-1) (Corynebacterium nigricans).